We begin with the raw amino-acid sequence, 522 residues long: Cell polarity protein mod5 (522 aa).

Disordered regions lie at residues 1 to 83 (MSAL…PDGD), 119 to 158 (KRSASKSPKRSANGSTSEDISIEGSPSETAKGARSSFNSN), 170 to 192 (RRILEASQDSSRPGRYSYRTKSA), 251 to 285 (PLQPYSPPANETPASSSSSAKARPVSVPDMSSPVP), and 300 to 516 (YSPS…KLEK). Polar residues-rich tracts occupy residues 27 to 46 (PNTTVGFQFDNRNVGTSAPS), 66 to 76 (LPSSKQDTGSS), and 131 to 146 (NGSTSEDISIEGSPSE). Ser43 carries the phosphoserine modification. The segment covering 258-285 (PANETPASSSSSAKARPVSVPDMSSPVP) has biased composition (low complexity). Ser303 is modified (phosphoserine). Basic and acidic residues predominate over residues 308–318 (KVAETDSESRK). A compositionally biased stretch (polar residues) spans 335-349 (GAQTQSTPNRISRSD). Position 350 is a phosphoserine (Ser350). Polar residues-rich tracts occupy residues 363-396 (NASTASSEAISQSMRSFQPQPNTGSPFPRFTSTN) and 404-431 (DIPQSDANDSTVNLNQPNYANLTPTPQV). Low complexity predominate over residues 439 to 452 (SRSSPLPSASVPAL). Basic and acidic residues-rich tracts occupy residues 472 to 482 (HESEMPPHVTR) and 495 to 516 (PKEKPSEKSEKPPKKKGSKLEK).

Interacts with tea1 and tea3.

Its subcellular location is the cell membrane. With tea1, acts in a positive-feedback loop in the microtubule-mediated regulation of cell polarity. Involved in the anchoring of tea1 at the cortex as well as the correct localization of tea3. The sequence is that of Cell polarity protein mod5 (mod5) from Schizosaccharomyces pombe (strain 972 / ATCC 24843) (Fission yeast).